The sequence spans 233 residues: NAD-dependent protein deacylase (233 aa).

The Deacetylase sirtuin-type domain occupies Met-1–Asp-230. NAD(+) is bound at residue Gly-9–Trp-28. Tyr-53 and Arg-56 together coordinate substrate. Position 88–91 (Gln-88–Asp-91) interacts with NAD(+). The active-site Proton acceptor is the His-106. Zn(2+)-binding residues include Cys-114, Cys-117, Cys-133, and Cys-136. Residues Gly-172–Ser-174 and Asn-200–Glu-202 contribute to the NAD(+) site.

It belongs to the sirtuin family. Class III subfamily. The cofactor is Zn(2+).

The protein localises to the cytoplasm. It carries out the reaction N(6)-acetyl-L-lysyl-[protein] + NAD(+) + H2O = 2''-O-acetyl-ADP-D-ribose + nicotinamide + L-lysyl-[protein]. The catalysed reaction is N(6)-succinyl-L-lysyl-[protein] + NAD(+) + H2O = 2''-O-succinyl-ADP-D-ribose + nicotinamide + L-lysyl-[protein]. NAD-dependent lysine deacetylase and desuccinylase that specifically removes acetyl and succinyl groups on target proteins. Modulates the activities of several proteins which are inactive in their acylated form. The sequence is that of NAD-dependent protein deacylase from Campylobacter jejuni subsp. jejuni serotype O:2 (strain ATCC 700819 / NCTC 11168).